The following is a 144-amino-acid chain: L-fucose mutarotase (144 aa).

H22 acts as the Proton donor in catalysis. Residues D30, R109, and Y131–N133 each bind substrate.

The protein belongs to the RbsD / FucU family. FucU mutarotase subfamily. Homodecamer.

The protein localises to the cytoplasm. The enzyme catalyses alpha-L-fucose = beta-L-fucose. It functions in the pathway carbohydrate metabolism; L-fucose metabolism. Involved in the anomeric conversion of L-fucose. This chain is L-fucose mutarotase, found in Haemophilus influenzae (strain 86-028NP).